We begin with the raw amino-acid sequence, 731 residues long: E3 ubiquitin-protein ligase SMURF1 (731 aa).

The region spanning 1–120 (MSNVVTRRGG…TGYQRLDLCK (120 aa)) is the C2 domain. Positions 210-235 (RVRGPEVREHVQTPQNRSHGFQSQDL) are disordered. The segment covering 221–234 (QTPQNRSHGFQSQD) has biased composition (polar residues). 2 consecutive WW domains span residues 233-266 (QDLP…DPRI) and 279-312 (GSLP…DPRL). The HECT domain occupies 394 to 731 (RPKDLKKRLM…VEETSGFAVE (338 aa)). Cysteine 699 (glycyl thioester intermediate) is an active-site residue.

The protein resides in the cytoplasm. The protein localises to the cell membrane. It catalyses the reaction S-ubiquitinyl-[E2 ubiquitin-conjugating enzyme]-L-cysteine + [acceptor protein]-L-lysine = [E2 ubiquitin-conjugating enzyme]-L-cysteine + N(6)-ubiquitinyl-[acceptor protein]-L-lysine.. It participates in protein modification; protein ubiquitination. Its function is as follows. E3 ubiquitin-protein ligase that acts as a negative regulator of BMP signaling pathway. Mediates ubiquitination and degradation of smad1 and smad5, 2 receptor-regulated SMADs specific for the BMP pathway. Promotes ubiquitination and subsequent proteasomal degradation of TRAF family members and rhoa. May play a role in dendrite formation by melanocytes. This chain is E3 ubiquitin-protein ligase SMURF1 (smurf1), found in Xenopus laevis (African clawed frog).